Consider the following 412-residue polypeptide: 43 kDa receptor-associated protein of the synapse (412 aa).

G2 carries the N-myristoyl glycine lipid modification. 7 TPR repeats span residues 6-39 (TKQQ…SADP), 83-116 (TEGY…QGTT), 123-156 (GQVS…AHNN), 163-196 (CRVC…VNDY), 206-239 (AMSQ…ALQH), 246-279 (ALCL…MTEI), and 286-319 (IQVL…AEGL). A Phosphotyrosine modification is found at Y196. The RING-type zinc-finger motif lies at 363 to 403 (CGMCGESIGEKNNQLQALPCSHFFHLKCLQTNGTRGCPNCR).

Belongs to the RAPsyn family. Expressed in muscle fibers and in neurons.

The protein localises to the cell membrane. The protein resides in the postsynaptic cell membrane. Its subcellular location is the cytoplasm. It localises to the cytoskeleton. Postsynaptic protein required for clustering of nicotinic acetylcholine receptors (nAChRs) at the neuromuscular junction. It may link the receptor to the underlying postsynaptic cytoskeleton, possibly by direct association with actin or spectrin. This is 43 kDa receptor-associated protein of the synapse (RAPSN) from Gallus gallus (Chicken).